Reading from the N-terminus, the 414-residue chain is MAYFQRLISCIFVLFLLSLAFACEARVLLDENNANDQGFVRVNGAHFELNGSPFLFNGFNSYWLMHVAAEPSERYKVSEVLREASSAGLSVCRTWAFSDGGDRALQISPGVYDERVFQGLDFVISEAKKYGIRLILSFVNNYNDFGGKAQYVQWARNAGAQINGDDDFYTNYITKNYYKNHIKKVVTRFNTITGMTYKDDSTIMAWELMNEPRNQADYSGNTLNAWVQEMASFVKSLDNKHLLEIGMEGFYGDSVPERKSINPGYQVGTDFISNHLIKEIDFATIHAYTDQWLSGQSDDAQMIFMQKWMTSHWQDAKNILKKPLVLAEFGKSSRDPGYNQNIRDTFMSTIYRNIYSLAKDGGTMGGSLIWQLVAQGMENYEDGYCIELGKNPSTAGIITSQSHAMTALAHLVKI.

The N-terminal stretch at 1–25 (MAYFQRLISCIFVLFLLSLAFACEA) is a signal peptide. Substrate contacts are provided by Trp-95 and Asn-210. The active-site Proton donor is the Glu-211. Tyr-288 serves as a coordination point for substrate. Glu-328 serves as the catalytic Nucleophile. Trp-370 contributes to the substrate binding site.

This sequence belongs to the glycosyl hydrolase 5 (cellulase A) family.

It is found in the secreted. The catalysed reaction is Random hydrolysis of (1-&gt;4)-beta-D-mannosidic linkages in mannans, galactomannans and glucomannans.. Possesses endo-beta-mannanase activity in vitro. May be involved in seed germination by weakening the endosperm cap prior to radicle emergence. The protein is Mannan endo-1,4-beta-mannosidase 2 (MAN2) of Solanum lycopersicum (Tomato).